Consider the following 543-residue polypeptide: Chaperonin GroEL (543 aa).

ATP is bound by residues 29-32, lysine 50, 86-90, glycine 413, 480-482, and aspartate 496; these read TLGP, DGTTT, and NAA. The tract at residues 524-543 is disordered; it reads EKPEKKESTPASAGAGDMDF.

The protein belongs to the chaperonin (HSP60) family. Forms a cylinder of 14 subunits composed of two heptameric rings stacked back-to-back. Interacts with the co-chaperonin GroES.

Its subcellular location is the cytoplasm. The enzyme catalyses ATP + H2O + a folded polypeptide = ADP + phosphate + an unfolded polypeptide.. In terms of biological role, together with its co-chaperonin GroES, plays an essential role in assisting protein folding. The GroEL-GroES system forms a nano-cage that allows encapsulation of the non-native substrate proteins and provides a physical environment optimized to promote and accelerate protein folding. The sequence is that of Chaperonin GroEL from Thermus thermophilus (strain ATCC BAA-163 / DSM 7039 / HB27).